The primary structure comprises 329 residues: Ribosomal protein L11 methyltransferase (329 aa).

S-adenosyl-L-methionine-binding residues include threonine 177, glycine 198, aspartate 220, and asparagine 264.

It belongs to the methyltransferase superfamily. PrmA family.

It is found in the cytoplasm. It carries out the reaction L-lysyl-[protein] + 3 S-adenosyl-L-methionine = N(6),N(6),N(6)-trimethyl-L-lysyl-[protein] + 3 S-adenosyl-L-homocysteine + 3 H(+). Its function is as follows. Methylates ribosomal protein L11. The chain is Ribosomal protein L11 methyltransferase from Helicobacter pylori (strain HPAG1).